The chain runs to 559 residues: Oxygen-dependent choline dehydrogenase (559 aa).

4–33 (DYIIIGAGSAGNVLATRLTEESDVSVLLLE) contributes to the FAD binding site. Residues 182–201 (EGFGPMDRTVTPKGRRASTA) form a disordered region. His-471 serves as the catalytic Proton acceptor.

It belongs to the GMC oxidoreductase family. The cofactor is FAD.

The catalysed reaction is choline + A = betaine aldehyde + AH2. It carries out the reaction betaine aldehyde + NAD(+) + H2O = glycine betaine + NADH + 2 H(+). It participates in amine and polyamine biosynthesis; betaine biosynthesis via choline pathway; betaine aldehyde from choline (cytochrome c reductase route): step 1/1. In terms of biological role, involved in the biosynthesis of the osmoprotectant glycine betaine. Catalyzes the oxidation of choline to betaine aldehyde and betaine aldehyde to glycine betaine at the same rate. The protein is Oxygen-dependent choline dehydrogenase of Pectobacterium carotovorum subsp. carotovorum (strain PC1).